We begin with the raw amino-acid sequence, 103 residues long: UPF0145 protein CYB_1351 (103 aa).

The protein belongs to the UPF0145 family.

The polypeptide is UPF0145 protein CYB_1351 (Synechococcus sp. (strain JA-2-3B'a(2-13)) (Cyanobacteria bacterium Yellowstone B-Prime)).